The chain runs to 784 residues: Toll-like receptor 2 (784 aa).

The first 20 residues, 1–20, serve as a signal peptide directing secretion; it reads MPRALWTAWVWAVIILSTEG. Topologically, residues 21–587 are extracellular; that stretch reads ASDQASSLSC…ARLSLSECHR (567 aa). A disulfide bridge links Cys-30 with Cys-36. LRR repeat units follow at residues 54-77, 78-101, 102-125, 126-150, 151-175, 176-199, 200-223, 224-250, 251-278, 279-308, 309-337, 338-361, 362-388, 389-414, 415-437, 438-457, 458-478, 479-500, and 501-524; these read VKSLDLSNNDITYVGNRDLQRCVN, LKTLRLGANEIHTVEEDSFFHLRN, LEYLDLSYNRLSNLSSSWFRSLYV, LKFLNLLGNLYKTLGETSLFSHLPN, LRTLKVGNSNSFTEIHEKDFTGLTF, LEELEISAQNLQIYVPKSLKSIQN, ISHLILHLKQPILLVDILVDIVSS, LDCFELRDTNLHTFHFSEASISEMSTS, VKKLIFRNVQFTDESFVEVVKLFNYVSG, ILEVEFDDCTHDGIGDFRALSLDRIRHLGN, VETLTIRKLHIPQFFLFHDLSSIYPLTGR, VKRVTIENSKVFLVPCLLSQHLKS, LEYLDLSENLMSEETLKNSACKDAWPF, LQTLVLRQNRLKSLEKTGELLLTLEN, LNNLDISKNNFLSMPETCQWPGK, MKQLNLSSTRIHSLTQCLPQ, TLEILDVSNNNLDSFSLILPQ, LKELYISRNKLKTLPDASFLPV, and LSVMRISRNIINTFSKEQLDSFQQ. Residue Asn-114 is glycosylated (N-linked (GlcNAc...) asparagine). A glycan (N-linked (GlcNAc...) asparagine) is linked at Asn-199. A disulfide bridge links Cys-353 with Cys-382. Cys-432 and Cys-454 are oxidised to a cystine. Asn-442 carries N-linked (GlcNAc...) asparagine glycosylation. The LRRCT domain occupies 525-579; the sequence is LKTLEAGGNNFICSCDFLSFTQGQQALGRVLVDWPDDYRCDSPSHVRGQRVQDAR. Residues 588–608 form a helical membrane-spanning segment; it reads AAVVSAACCALFLLLLLTGVL. Topologically, residues 609 to 784 are cytoplasmic; the sequence is CHRFHGLWYM…WLNLRAAIRS (176 aa). Residues 639–782 enclose the TIR domain; the sequence is ICYDAFVSYS…GFWLNLRAAI (144 aa). A Glycyl lysine isopeptide (Lys-Gly) (interchain with G-Cter in ubiquitin) cross-link involves residue Lys-754. Residues 761-778 carry the ATG16L1-binding motif motif; the sequence is YLEWPVDETQQEGFWLNL.

This sequence belongs to the Toll-like receptor family. As to quaternary structure, interacts with LY96, TLR1 and TLR6 (via extracellular domain). TLR2 seems to exist in heterodimers with either TLR1 or TLR6 before stimulation by the ligand. The heterodimers form bigger oligomers in response to their corresponding ligands as well as further heterotypic associations with other receptors such as CD14 and/or CD36. Binds MYD88 (via TIR domain). Interacts with TICAM1. Interacts with CNPY3. Interacts with ATG16L1. Interacts with PPP1R11. Interacts with TICAM2. Interacts with TIRAP. Ubiquitinated at Lys-754 by PPP1R11, leading to its degradation. Deubiquitinated by USP2. Post-translationally, glycosylation of Asn-442 is critical for secretion of the N-terminal ectodomain of TLR2.

The protein localises to the membrane. It is found in the cytoplasmic vesicle. It localises to the phagosome membrane. Its subcellular location is the membrane raft. Functionally, cooperates with LY96 to mediate the innate immune response to bacterial lipoproteins and other microbial cell wall components. Cooperates with TLR1 or TLR6 to mediate the innate immune response to bacterial lipoproteins or lipopeptides. Acts via MYD88 and TRAF6, leading to NF-kappa-B activation, cytokine secretion and the inflammatory response. May also promote apoptosis in response to lipoproteins. Forms activation clusters composed of several receptors depending on the ligand, these clusters trigger signaling from the cell surface and subsequently are targeted to the Golgi in a lipid-raft dependent pathway. Forms the cluster TLR2:TLR6:CD14:CD36 in response to diacylated lipopeptides and TLR2:TLR1:CD14 in response to triacylated lipopeptides. The sequence is that of Toll-like receptor 2 (TLR2) from Bos taurus (Bovine).